The sequence spans 475 residues: MVSTTKSTGSVTQIIGPVLDIAFPNGQLPKVFNALKVQSTDGTITCEVQQLLGDNKVRAVSMSSTEGLKRGVEVVDTGAPISVPVGTNTLGRIFNVLGEPVDNLGPVSSESTLPIHRPAPAFTKLETKPSIFETGIKVVDLLAPYRRGGKIGLFGGAGVGKTVLIMELINNIAKAHGGVSVFGGVGERTREGNDLYMEMKESKVINEDNLKESKVALVYGQMNEPPGARMRVGLTALTMAEYFRDINKQDVLLFIDNIFRFVQAGSEVSALLGRMPSAVGYQPTLATEMGALQERITSTTEGSITSIQAVYVPADDLTDPAPATTFAHLDATTVLSRNLAAKGIYPAVDPLDSTSTMLQPGIVGTDHYSTAQEVKSTLQRYKELQDIIAILGLDELSEEDRQTVSRARKIERFLSQPFFVAEVFTGSPGKYVSLEDAIKGFQMILKGELDDLPEQAFYLVGDIDEAIQKADSMKD.

155 to 162 (GGAGVGKT) contacts ATP.

This sequence belongs to the ATPase alpha/beta chains family. In terms of assembly, F-type ATPases have 2 components, CF(1) - the catalytic core - and CF(0) - the membrane proton channel. CF(1) has five subunits: alpha(3), beta(3), gamma(1), delta(1), epsilon(1). CF(0) has four main subunits: a(1), b(1), b'(1) and c(9-12).

Its subcellular location is the plastid. The protein resides in the chloroplast thylakoid membrane. The enzyme catalyses ATP + H2O + 4 H(+)(in) = ADP + phosphate + 5 H(+)(out). Functionally, produces ATP from ADP in the presence of a proton gradient across the membrane. The catalytic sites are hosted primarily by the beta subunits. This chain is ATP synthase subunit beta, chloroplastic, found in Porphyra purpurea (Red seaweed).